The following is a 250-amino-acid chain: Glutathione transferase omega-1 (250 aa).

The 81-residue stretch at 21–101 (SKGSFRVYNM…YLDDAFPETR (81 aa)) folds into the GST N-terminal domain. The active-site Nucleophile is the Cys33. Residues Lys60 and 85 to 86 (ES) contribute to the glutathione site. The 129-residue stretch at 106 to 234 (DPYEKVQQKL…TQSLEHGAAF (129 aa)) folds into the GST C-terminal domain.

It belongs to the GST superfamily. Omega family. In terms of assembly, homodimer. As to expression, expressed in the intestinal cells.

The protein localises to the cytoplasm. It catalyses the reaction RX + glutathione = an S-substituted glutathione + a halide anion + H(+). The enzyme catalyses L-dehydroascorbate + 2 glutathione = glutathione disulfide + L-ascorbate. It carries out the reaction methylarsonate + 2 glutathione + H(+) = methylarsonous acid + glutathione disulfide + H2O. In terms of biological role, exhibits glutathione-dependent thiol transferase activity. Has dehydroascorbate reductase activity and may contribute to the recycling of ascorbic acid. Participates in the biotransformation of inorganic arsenic and reduces monomethylarsonic acid (MMA). Protects against environmental stress and oxidative stress. This Caenorhabditis elegans protein is Glutathione transferase omega-1 (gsto-1).